A 473-amino-acid chain; its full sequence is Photosystem II CP43 reaction center protein (473 aa).

The propeptide occupies 1–14; the sequence is MKTLYSLRRFYHVE. Position 15 is an N-acetylthreonine (Thr-15). Position 15 is a phosphothreonine (Thr-15). The next 5 membrane-spanning stretches (helical) occupy residues 69-93, 134-155, 178-200, 255-275, and 291-312; these read LFEV…PHLA, LIGP…RDKN, KAIY…RIID, KPFA…LSYS, and WYNN…ASQS. A [CaMn4O5] cluster-binding site is contributed by Glu-367. Residues 447-471 traverse the membrane as a helical segment; it reads RARAAAAGFEKGINRENEPVLTLRP.

It belongs to the PsbB/PsbC family. PsbC subfamily. As to quaternary structure, PSII is composed of 1 copy each of membrane proteins PsbA, PsbB, PsbC, PsbD, PsbE, PsbF, PsbH, PsbI, PsbJ, PsbK, PsbL, PsbM, PsbT, PsbX, PsbY, PsbZ, Psb30/Ycf12, at least 3 peripheral proteins of the oxygen-evolving complex and a large number of cofactors. It forms dimeric complexes. Binds multiple chlorophylls and provides some of the ligands for the Ca-4Mn-5O cluster of the oxygen-evolving complex. It may also provide a ligand for a Cl- that is required for oxygen evolution. PSII binds additional chlorophylls, carotenoids and specific lipids. is required as a cofactor.

Its subcellular location is the plastid. It is found in the chloroplast thylakoid membrane. Functionally, one of the components of the core complex of photosystem II (PSII). It binds chlorophyll and helps catalyze the primary light-induced photochemical processes of PSII. PSII is a light-driven water:plastoquinone oxidoreductase, using light energy to abstract electrons from H(2)O, generating O(2) and a proton gradient subsequently used for ATP formation. This is Photosystem II CP43 reaction center protein from Guillardia theta (Cryptophyte).